Consider the following 465-residue polypeptide: UDP-N-acetylmuramoylalanine--D-glutamate ligase (465 aa).

127-133 (GSNGKST) is an ATP binding site.

This sequence belongs to the MurCDEF family.

It localises to the cytoplasm. The enzyme catalyses UDP-N-acetyl-alpha-D-muramoyl-L-alanine + D-glutamate + ATP = UDP-N-acetyl-alpha-D-muramoyl-L-alanyl-D-glutamate + ADP + phosphate + H(+). It participates in cell wall biogenesis; peptidoglycan biosynthesis. Functionally, cell wall formation. Catalyzes the addition of glutamate to the nucleotide precursor UDP-N-acetylmuramoyl-L-alanine (UMA). The protein is UDP-N-acetylmuramoylalanine--D-glutamate ligase of Cereibacter sphaeroides (strain ATCC 17025 / ATH 2.4.3) (Rhodobacter sphaeroides).